The following is a 510-amino-acid chain: NAD(P)H-quinone oxidoreductase subunit 2 B, chloroplastic (510 aa).

Helical transmembrane passes span 24 to 44 (LLLF…GLIL), 57 to 77 (LPWF…ALLF), 99 to 119 (IFQF…VEYI), 124 to 144 (MAIT…MFLC), 149 to 169 (LITI…LSGY), 183 to 203 (YLLM…WLYG), 227 to 247 (PGIS…LSPA), 295 to 315 (WHLL…IIAI), 323 to 343 (MLAY…IVGD), 354 to 374 (YMLF…LFGL), 395 to 415 (ALSL…AGFF), 428 to 448 (GLYS…YYYL), and 484 to 504 (MIVC…IIAI).

Belongs to the complex I subunit 2 family. As to quaternary structure, NDH is composed of at least 16 different subunits, 5 of which are encoded in the nucleus.

The protein resides in the plastid. It localises to the chloroplast thylakoid membrane. The catalysed reaction is a plastoquinone + NADH + (n+1) H(+)(in) = a plastoquinol + NAD(+) + n H(+)(out). It catalyses the reaction a plastoquinone + NADPH + (n+1) H(+)(in) = a plastoquinol + NADP(+) + n H(+)(out). Functionally, NDH shuttles electrons from NAD(P)H:plastoquinone, via FMN and iron-sulfur (Fe-S) centers, to quinones in the photosynthetic chain and possibly in a chloroplast respiratory chain. The immediate electron acceptor for the enzyme in this species is believed to be plastoquinone. Couples the redox reaction to proton translocation, and thus conserves the redox energy in a proton gradient. This is NAD(P)H-quinone oxidoreductase subunit 2 B, chloroplastic from Jasminum nudiflorum (Winter jasmine).